A 126-amino-acid chain; its full sequence is Ribosome-binding factor A (126 aa).

This sequence belongs to the RbfA family. Monomer. Binds 30S ribosomal subunits, but not 50S ribosomal subunits or 70S ribosomes.

It localises to the cytoplasm. In terms of biological role, one of several proteins that assist in the late maturation steps of the functional core of the 30S ribosomal subunit. Associates with free 30S ribosomal subunits (but not with 30S subunits that are part of 70S ribosomes or polysomes). Required for efficient processing of 16S rRNA. May interact with the 5'-terminal helix region of 16S rRNA. The sequence is that of Ribosome-binding factor A from Clostridioides difficile (strain 630) (Peptoclostridium difficile).